Reading from the N-terminus, the 251-residue chain is NADPH-dependent oxidoreductase (251 aa).

This sequence belongs to the flavin oxidoreductase frp family. FMN is required as a cofactor.

Its function is as follows. Reduces FMN, organic nitro compounds and disulfide DTNB. Involved in maintenance of the cellular redox state and the disulfide stress response. This Staphylococcus saprophyticus subsp. saprophyticus (strain ATCC 15305 / DSM 20229 / NCIMB 8711 / NCTC 7292 / S-41) protein is NADPH-dependent oxidoreductase (nfrA).